An 85-amino-acid chain; its full sequence is Large ribosomal subunit protein bL27 (85 aa).

Positions methionine 1 to arginine 20 are disordered.

It belongs to the bacterial ribosomal protein bL27 family.

The chain is Large ribosomal subunit protein bL27 from Haemophilus influenzae (strain ATCC 51907 / DSM 11121 / KW20 / Rd).